Consider the following 393-residue polypeptide: Chalcone synthase (393 aa).

Cysteine 164 is a catalytic residue.

Belongs to the thiolase-like superfamily. Chalcone/stilbene synthases family.

It carries out the reaction (E)-4-coumaroyl-CoA + 3 malonyl-CoA + 3 H(+) = 2',4,4',6'-tetrahydroxychalcone + 3 CO2 + 4 CoA. It participates in secondary metabolite biosynthesis; flavonoid biosynthesis. Functionally, the primary product of this enzyme is 4,2',4',6'-tetrahydroxychalcone (also termed naringenin-chalcone or chalcone) which can under specific conditions spontaneously isomerize into naringenin. This Vitis vinifera (Grape) protein is Chalcone synthase (CHS).